We begin with the raw amino-acid sequence, 213 residues long: Uridine kinase (213 aa).

Gly-14–Ser-21 is an ATP binding site.

Belongs to the uridine kinase family.

The protein localises to the cytoplasm. The enzyme catalyses uridine + ATP = UMP + ADP + H(+). The catalysed reaction is cytidine + ATP = CMP + ADP + H(+). Its pathway is pyrimidine metabolism; CTP biosynthesis via salvage pathway; CTP from cytidine: step 1/3. It participates in pyrimidine metabolism; UMP biosynthesis via salvage pathway; UMP from uridine: step 1/1. The polypeptide is Uridine kinase (Vibrio atlanticus (strain LGP32) (Vibrio splendidus (strain Mel32))).